Reading from the N-terminus, the 153-residue chain is uncharacterized protein (153 aa).

The signal sequence occupies residues 1-19; sequence MKACLLLFFYFSFICQLHG.

This is an uncharacterized protein from Escherichia coli (strain K12).